We begin with the raw amino-acid sequence, 159 residues long: Protransforming growth factor alpha (159 aa).

The first 23 residues, M1–L23, serve as a signal peptide directing secretion. Positions E24–A38 are cleaved as a propeptide — removed in mature form. The Extracellular portion of the chain corresponds to E24–Q97. The N-linked (GlcNAc...) asparagine glycan is linked to N25. The EGF-like domain maps to N44–H83. 3 disulfides stabilise this stretch: C46–C59, C54–C70, and C72–C81. The propeptide at V89–V159 is removed in mature form. The helical transmembrane segment at A98–C123 threads the bilayer. Residues Q124–V159 are Cytoplasmic-facing. Residues C152 and C153 are each lipidated (S-palmitoyl cysteine).

As to quaternary structure, interacts with the PDZ domains of SDCBP and SNTA1. The interaction with SDCBP, is required for the targeting to the cell surface. In the endoplasmic reticulum, in its immature form (i.e. with a prosegment and lacking full N-glycosylation), interacts with CNIH. In the Golgi apparatus, may form a complex with CNIH and GORASP2. Interacts (via cytoplasmic C-terminal domain) with NKD2. Interacts with MAGI3.

The protein localises to the secreted. The protein resides in the extracellular space. Its subcellular location is the cell membrane. Its function is as follows. TGF alpha is a mitogenic polypeptide that is able to bind to the EGF receptor/EGFR and to act synergistically with TGF beta to promote anchorage-independent cell proliferation in soft agar. The chain is Protransforming growth factor alpha (Tgfa) from Mus musculus (Mouse).